A 263-amino-acid polypeptide reads, in one-letter code: Ribosomal RNA large subunit methyltransferase E (263 aa).

Residues Gly50, Trp52, Asp68, Asn84, and Asp109 each coordinate S-adenosyl-L-methionine. The active-site Proton acceptor is Lys149. The region spanning 196–254 is the TRAM domain; that stretch reads PLRKGDKFVVDIEKLGSSGDGAVLIEGFVVFVKEVEVGEKVRIKITDVKPNFAFADVAE.

The protein belongs to the class I-like SAM-binding methyltransferase superfamily. RNA methyltransferase RlmE family.

Its subcellular location is the cytoplasm. The enzyme catalyses uridine(2552) in 23S rRNA + S-adenosyl-L-methionine = 2'-O-methyluridine(2552) in 23S rRNA + S-adenosyl-L-homocysteine + H(+). Functionally, specifically methylates the uridine in position 2552 of 23S rRNA at the 2'-O position of the ribose in the fully assembled 50S ribosomal subunit. This Methanosarcina barkeri (strain Fusaro / DSM 804) protein is Ribosomal RNA large subunit methyltransferase E.